Reading from the N-terminus, the 1153-residue chain is Nitric oxide synthase, inducible (1153 aa).

Positions 23–27 match the DINNN-motif; mediates interaction with SPSB1, SPSB2 and SPSB4 motif; that stretch reads DINNN. Cys110 and Cys115 together coordinate Zn(2+). Residue Ser118 coordinates (6R)-L-erythro-5,6,7,8-tetrahydrobiopterin. A heme b-binding site is contributed by Cys200. The residue at position 234 (Ser234) is a Phosphoserine; by PKA. L-arginine is bound by residues Gln263, Trp372, Tyr373, and Glu377. (6R)-L-erythro-5,6,7,8-tetrahydrobiopterin contacts are provided by Arg381, Ile462, Trp463, and Phe476. Tyr491 serves as a coordination point for heme b. Positions 515-535 are calmodulin-binding; that stretch reads LKVLVKAVLFACMLMRKTMAS. Positions 539-677 constitute a Flavodoxin-like domain; the sequence is VTILFATETG…AFRSWAVQTF (139 aa). Residues Thr545, Glu546, Thr547, Lys549, and Ser550 each contribute to the FMN site. Tyr575 carries the post-translational modification Phosphotyrosine. The residue at position 578 (Ser578) is a Phosphoserine; by PKA. FMN is bound by residues Ser591, Thr592, Ser628, Arg633, Cys635, Glu661, and Gln665. An FAD-binding FR-type domain is found at 730-970; sequence KNVFTMRLKS…VRNASGFHLP (241 aa). Arg750 is an NADP(+) binding site. His772 contributes to the FAD binding site. The residue at position 892 (Ser892) is a Phosphoserine; by PKA. FAD-binding residues include Arg906, Tyr908, Ser909, Thr924, and Ala926. Thr929 serves as a coordination point for NADP(+). Residues Tyr930, Val943, Cys944, and Ser945 each contribute to the FAD site. 8 residues coordinate NADP(+): Thr984, Arg1017, Ser1046, Arg1047, Lys1053, Tyr1055, Gln1057, and Asp1090.

It belongs to the NOS family. As to quaternary structure, homodimer. Interacts with NHERF1. Interacts with GAPDH; induced by oxidatively-modified low-densitity lipoprotein (LDL(ox)). Interacts with S100A8 and S100A9 to form the iNOS-S100A8/9 transnitrosylase complex. Interacts with SPSB1, SPSB2 and SPSB4. Interacts with ELOC and CUL5 in the presence of SPSB1 or SPSB2 or SPSB4. Forms a complex with ASL, ASS1 and HSP90AA1; the complex regulates cell-autonomous L-arginine synthesis and citrulline recycling while channeling extracellular L-arginine to nitric oxide synthesis pathway. Requires heme b as cofactor. The cofactor is FAD. FMN is required as a cofactor. It depends on (6R)-L-erythro-5,6,7,8-tetrahydrobiopterin as a cofactor. In terms of processing, polyubiquitinated; mediated by SPSB1, SPSB2 and SPSB4, leading to proteasomal degradation. As to expression, expressed in the liver, retina, bone cells and airway epithelial cells of the lung. Not expressed in the platelets. Expressed in chondrocytes.

The protein resides in the cytoplasm. It is found in the cytosol. The catalysed reaction is 2 L-arginine + 3 NADPH + 4 O2 + H(+) = 2 L-citrulline + 2 nitric oxide + 3 NADP(+) + 4 H2O. Its activity is regulated as follows. Regulated by calcium/calmodulin. Aspirin inhibits expression and function of this enzyme and effects may be exerted at the level of translational/post-translational modification and directly on the catalytic activity. In terms of biological role, produces nitric oxide (NO) which is a messenger molecule with diverse functions throughout the body. In macrophages, NO mediates tumoricidal and bactericidal actions. Also has nitrosylase activity and mediates cysteine S-nitrosylation of cytoplasmic target proteins such PTGS2/COX2. As component of the iNOS-S100A8/9 transnitrosylase complex involved in the selective inflammatory stimulus-dependent S-nitrosylation of GAPDH on 'Cys-247' implicated in regulation of the GAIT complex activity and probably multiple targets including ANXA5, EZR, MSN and VIM. Involved in inflammation, enhances the synthesis of pro-inflammatory mediators such as IL6 and IL8. In Homo sapiens (Human), this protein is Nitric oxide synthase, inducible.